The chain runs to 196 residues: Carnitine operon protein CaiE (196 aa).

The tract at residues 173–196 (TQPLRQMEENRPRLQGTTDVTPKR) is disordered. The segment covering 187 to 196 (QGTTDVTPKR) has biased composition (polar residues).

This sequence belongs to the transferase hexapeptide repeat family.

Its pathway is amine and polyamine metabolism; carnitine metabolism. Its function is as follows. Overproduction of CaiE stimulates the activity of CaiB and CaiD. The protein is Carnitine operon protein CaiE of Escherichia coli O7:K1 (strain IAI39 / ExPEC).